The chain runs to 362 residues: Histidinol-phosphate aminotransferase (362 aa).

K211 carries the post-translational modification N6-(pyridoxal phosphate)lysine.

This sequence belongs to the class-II pyridoxal-phosphate-dependent aminotransferase family. Histidinol-phosphate aminotransferase subfamily. In terms of assembly, homodimer. Pyridoxal 5'-phosphate is required as a cofactor.

It carries out the reaction L-histidinol phosphate + 2-oxoglutarate = 3-(imidazol-4-yl)-2-oxopropyl phosphate + L-glutamate. The protein operates within amino-acid biosynthesis; L-histidine biosynthesis; L-histidine from 5-phospho-alpha-D-ribose 1-diphosphate: step 7/9. The polypeptide is Histidinol-phosphate aminotransferase (Serratia proteamaculans (strain 568)).